Reading from the N-terminus, the 23-residue chain is Paralytic peptide 2 (23 aa).

A disulfide bridge links Cys7 with Cys19.

Belongs to the GBP/PSP1/paralytic peptide family. In terms of tissue distribution, hemolymph.

Its function is as follows. Causes rapid, rigid paralysis when injected into Lepidopteran larvae. The physiological role may be to reduce hemolymph loss following injury and promote wound healing. This is Paralytic peptide 2 from Manduca sexta (Tobacco hawkmoth).